A 46-amino-acid chain; its full sequence is MKTTGSSVGGTKRKMWSRGVGGVVREQKAKLYIIRRCVVMLLCWHD.

The helical transmembrane segment at 8 to 24 (VGGTKRKMWSRGVGGVV) threads the bilayer. Residues 15 to 46 (MWSRGVGGVVREQKAKLYIIRRCVVMLLCWHD) form a required for DVL/RTFL small polypeptide activity region.

It belongs to the DVL/RTFL small polypeptides family. As to expression, mostly expressed in roots and flowers, and, to a lower extent, in leaves and stems.

It is found in the cell membrane. Small polypeptide acting as a regulatory molecule which coordinates cellular responses required for differentiation, growth and development, including leaves shape, pedicule elongation, inflorescence organization and fruit maturation, probably by restricting polar cell proliferation in lateral organs and coordinating socket cell recruitment and differentiation at trichome sites. This chain is Small polypeptide DEVIL 5, found in Arabidopsis thaliana (Mouse-ear cress).